Here is a 136-residue protein sequence, read N- to C-terminus: uncharacterized protein (136 aa).

This is an uncharacterized protein from Methanocaldococcus jannaschii (strain ATCC 43067 / DSM 2661 / JAL-1 / JCM 10045 / NBRC 100440) (Methanococcus jannaschii).